The sequence spans 91 residues: UPF0250 protein BB0170 (91 aa).

The protein belongs to the UPF0250 family.

The polypeptide is UPF0250 protein BB0170 (Bordetella bronchiseptica (strain ATCC BAA-588 / NCTC 13252 / RB50) (Alcaligenes bronchisepticus)).